The following is an 856-amino-acid chain: DNA mismatch repair protein MutS (856 aa).

617-624 contacts ATP; the sequence is GPNMGGKS.

Belongs to the DNA mismatch repair MutS family.

Functionally, this protein is involved in the repair of mismatches in DNA. It is possible that it carries out the mismatch recognition step. This protein has a weak ATPase activity. This Psychromonas ingrahamii (strain DSM 17664 / CCUG 51855 / 37) protein is DNA mismatch repair protein MutS.